Here is a 137-residue protein sequence, read N- to C-terminus: Large ribosomal subunit protein uL16 (137 aa).

Positions 1–17 (MLSPKRTKFRKQQRGRM) are enriched in basic residues. The interval 1-24 (MLSPKRTKFRKQQRGRMRGNANSG) is disordered.

This sequence belongs to the universal ribosomal protein uL16 family. In terms of assembly, part of the 50S ribosomal subunit.

Functionally, binds 23S rRNA and is also seen to make contacts with the A and possibly P site tRNAs. This Trichodesmium erythraeum (strain IMS101) protein is Large ribosomal subunit protein uL16.